The primary structure comprises 245 residues: 1-(5-phosphoribosyl)-5-[(5-phosphoribosylamino)methylideneamino] imidazole-4-carboxamide isomerase (245 aa).

The active-site Proton acceptor is the Asp8. Catalysis depends on Asp131, which acts as the Proton donor.

The protein belongs to the HisA/HisF family.

The protein localises to the cytoplasm. The enzyme catalyses 1-(5-phospho-beta-D-ribosyl)-5-[(5-phospho-beta-D-ribosylamino)methylideneamino]imidazole-4-carboxamide = 5-[(5-phospho-1-deoxy-D-ribulos-1-ylimino)methylamino]-1-(5-phospho-beta-D-ribosyl)imidazole-4-carboxamide. It participates in amino-acid biosynthesis; L-histidine biosynthesis; L-histidine from 5-phospho-alpha-D-ribose 1-diphosphate: step 4/9. This is 1-(5-phosphoribosyl)-5-[(5-phosphoribosylamino)methylideneamino] imidazole-4-carboxamide isomerase from Neisseria meningitidis serogroup C / serotype 2a (strain ATCC 700532 / DSM 15464 / FAM18).